A 98-amino-acid chain; its full sequence is NADH-ubiquinone oxidoreductase chain 4L (98 aa).

The next 3 membrane-spanning stretches (helical) occupy residues 1 to 21 (MTLI…GLLM), 29 to 49 (ALLC…LTIL), and 61 to 81 (IILL…LVMV).

It belongs to the complex I subunit 4L family. As to quaternary structure, core subunit of respiratory chain NADH dehydrogenase (Complex I) which is composed of 45 different subunits.

Its subcellular location is the mitochondrion inner membrane. The catalysed reaction is a ubiquinone + NADH + 5 H(+)(in) = a ubiquinol + NAD(+) + 4 H(+)(out). Its function is as follows. Core subunit of the mitochondrial membrane respiratory chain NADH dehydrogenase (Complex I) which catalyzes electron transfer from NADH through the respiratory chain, using ubiquinone as an electron acceptor. Part of the enzyme membrane arm which is embedded in the lipid bilayer and involved in proton translocation. The protein is NADH-ubiquinone oxidoreductase chain 4L (MT-ND4L) of Balaenoptera bonaerensis (Antarctic minke whale).